The sequence spans 434 residues: Flagellum-specific ATP synthase (434 aa).

164 to 171 provides a ligand contact to ATP; that stretch reads AGSGVGKS.

Belongs to the ATPase alpha/beta chains family.

The protein localises to the cytoplasm. It carries out the reaction ATP + H2O + 4 H(+)(in) = ADP + phosphate + 5 H(+)(out). Functionally, probable catalytic subunit of a protein translocase for flagellum-specific export, or a proton translocase involved in local circuits at the flagellum. The chain is Flagellum-specific ATP synthase (fliI) from Helicobacter pylori (strain J99 / ATCC 700824) (Campylobacter pylori J99).